The chain runs to 194 residues: Peptidyl-tRNA hydrolase (194 aa).

Y17 provides a ligand contact to tRNA. Residue H22 is the Proton acceptor of the active site. TRNA-binding residues include F68, N70, and N116.

The protein belongs to the PTH family. In terms of assembly, monomer.

Its subcellular location is the cytoplasm. It carries out the reaction an N-acyl-L-alpha-aminoacyl-tRNA + H2O = an N-acyl-L-amino acid + a tRNA + H(+). Hydrolyzes ribosome-free peptidyl-tRNAs (with 1 or more amino acids incorporated), which drop off the ribosome during protein synthesis, or as a result of ribosome stalling. In terms of biological role, catalyzes the release of premature peptidyl moieties from peptidyl-tRNA molecules trapped in stalled 50S ribosomal subunits, and thus maintains levels of free tRNAs and 50S ribosomes. This Haemophilus ducreyi (strain 35000HP / ATCC 700724) protein is Peptidyl-tRNA hydrolase.